Reading from the N-terminus, the 195-residue chain is Thymidylate kinase (195 aa).

Glycine 7–serine 14 serves as a coordination point for ATP.

This sequence belongs to the thymidylate kinase family.

It catalyses the reaction dTMP + ATP = dTDP + ADP. Functionally, phosphorylation of dTMP to form dTDP in both de novo and salvage pathways of dTTP synthesis. This chain is Thymidylate kinase, found in Campylobacter hominis (strain ATCC BAA-381 / DSM 21671 / CCUG 45161 / LMG 19568 / NCTC 13146 / CH001A).